The primary structure comprises 329 residues: N-acetylmuramoyl-L-alanine amidase sle1 (329 aa).

Positions 1-26 (MNKKILATAVLGTGALSTLFAHQAEA) are cleaved as a signal peptide. 3 consecutive LysM domains span residues 28-71 (TTHT…VLKV), 88-131 (STYT…QLKV), and 152-195 (STYT…KLRV). The Peptidase C51 domain maps to 205 to 329 (STRSAQSTYY…YQVRNYKFIH (125 aa)).

It localises to the secreted. Its subcellular location is the cell surface. It carries out the reaction Hydrolyzes the link between N-acetylmuramoyl residues and L-amino acid residues in certain cell-wall glycopeptides.. Its function is as follows. Peptidoglycan hydrolase involved in the splitting of the septum during cell division. This chain is N-acetylmuramoyl-L-alanine amidase sle1 (sle1), found in Staphylococcus haemolyticus (strain JCSC1435).